The primary structure comprises 114 residues: T cell receptor alpha variable 24 (114 aa).

An N-terminal signal peptide occupies residues 1–22; the sequence is MEKNPLAAPLLILWFHLDCVSS. Residues 23-114 form the Ig-like domain; sequence ILNVEQSPQS…EDSATYLCAF (92 aa). Asn42 carries N-linked (GlcNAc...) asparagine glycosylation. Residues Cys45 and Cys112 are joined by a disulfide bond.

Alpha-beta TR is a heterodimer composed of an alpha and beta chain; disulfide-linked. The alpha-beta TR is associated with the transmembrane signaling CD3 coreceptor proteins to form the TR-CD3 (TcR or TCR). The assembly of alpha-beta TR heterodimers with CD3 occurs in the endoplasmic reticulum where a single alpha-beta TR heterodimer associates with one CD3D-CD3E heterodimer, one CD3G-CD3E heterodimer and one CD247 homodimer forming a stable octameric structure. CD3D-CD3E and CD3G-CD3E heterodimers preferentially associate with TR alpha and TR beta chains, respectively. The association of the CD247 homodimer is the last step of TcR assembly in the endoplasmic reticulum and is required for transport to the cell surface.

It is found in the cell membrane. Functionally, v region of the variable domain of T cell receptor (TR) alpha chain that participates in the antigen recognition. Alpha-beta T cell receptors are antigen specific receptors which are essential to the immune response and are present on the cell surface of T lymphocytes. Recognize peptide-major histocompatibility (MH) (pMH) complexes that are displayed by antigen presenting cells (APC), a prerequisite for efficient T cell adaptive immunity against pathogens. Binding of alpha-beta TR to pMH complex initiates TR-CD3 clustering on the cell surface and intracellular activation of LCK that phosphorylates the ITAM motifs of CD3G, CD3D, CD3E and CD247 enabling the recruitment of ZAP70. In turn ZAP70 phosphorylates LAT, which recruits numerous signaling molecules to form the LAT signalosome. The LAT signalosome propagates signal branching to three major signaling pathways, the calcium, the mitogen-activated protein kinase (MAPK) kinase and the nuclear factor NF-kappa-B (NF-kB) pathways, leading to the mobilization of transcription factors that are critical for gene expression and essential for T cell growth and differentiation. The T cell repertoire is generated in the thymus, by V-(D)-J rearrangement. This repertoire is then shaped by intrathymic selection events to generate a peripheral T cell pool of self-MH restricted, non-autoaggressive T cells. Post-thymic interaction of alpha-beta TR with the pMH complexes shapes TR structural and functional avidity. This is T cell receptor alpha variable 24 from Homo sapiens (Human).